Consider the following 1046-residue polypeptide: UDP-N-acetylglucosamine--peptide N-acetylglucosaminyltransferase 110 kDa subunit (1046 aa).

Alanine 2 is modified (N-acetylalanine). 2 positions are modified to phosphoserine; by GSK3-beta; alternate: serine 3 and serine 4. 2 O-linked (GlcNAc) serine; alternate glycosylation sites follow: serine 3 and serine 4. Aspartate 10 carries O-linked (GlcNAc) serine glycosylation. O-linked (GlcNAc) threonine glycosylation is present at threonine 12. Methionine 18 carries an O-linked (GlcNAc) serine glycan. The residue at position 20 (serine 20) is a Phosphoserine. A TPR 1 repeat occupies phenylalanine 21–asparagine 54. A glycan (O-linked (GlcNAc) threonine) is linked at glutamate 38. Proline 52 and glycine 56 each carry an O-linked (GlcNAc) serine glycan. TPR repeat units lie at residues alanine 89 to phenylalanine 122, isoleucine 123 to leucine 156, tyrosine 157 to phenylalanine 190, alanine 191 to phenylalanine 224, leucine 225 to histidine 258, alanine 259 to phenylalanine 292, proline 293 to histidine 326, alanine 327 to phenylalanine 360, alanine 361 to phenylalanine 394, alanine 395 to phenylalanine 428, and alanine 429 to phenylalanine 462. The O-linked (GlcNAc) serine; by autocatalysis glycan is linked to serine 399. Position 454 is a phosphothreonine; by AMPK (threonine 454). One copy of the TPR 13; truncated repeat lies at proline 463–leucine 473. Positions aspartate 464–tyrosine 466 match the DFP motif motif. The short motif at lysine 487 to proline 503 is the Nuclear localization signal element. Histidine 508 serves as the catalytic Proton acceptor. UDP contacts are provided by residues glutamine 849, lysine 852, alanine 906–lysine 908, histidine 911–arginine 914, histidine 930–threonine 932, and aspartate 935. Residue tyrosine 989 is modified to Phosphotyrosine. Residues lysine 991–lysine 1010 are required for phosphatidylinositol 3,4,5-triphosphate binding.

This sequence belongs to the glycosyltransferase 41 family. O-GlcNAc transferase subfamily. As to quaternary structure, monomer; may exist in different oligomerization states in cells. Homotrimer, oligomerizes via TPR repeats 6 and 7. Trimerization is not necessary for activity in vitro, however it increases affinity for UDP-GlcNAc. Component of a THAP1/THAP3-HCFC1-OGT complex. Component of the NSL complex at least composed of MOF/KAT8, KANSL1, KANSL2, KANSL3, MCRS1, PHF20, OGT1/OGT, WDR5 and HCFC1. Found in a complex with KIF5B, RHOT1, RHOT2 and TRAK1. Found in a complex composed of at least SINHCAF, SIN3A, HDAC1, SAP30, RBBP4, OGT and TET1. Component of a complex composed of KMT2E/MLL5 (isoform 3), OGT (isoform 1) and USP7; the complex stabilizes KMT2E/MLL5, preventing KMT2E/MLL5 ubiquitination and proteasomal-mediated degradation. Interacts (via TPRs 1-6) with SIN3A; the interaction mediates transcriptional repression in parallel with histone deacetylase. Interacts (via TPR 5-6) with TET1, TET2 and TET3. Interacts (via TPR repeats 6 and 7) with ATXN10. Interacts with NSD2. Interacts with PROSER1; this interaction mediates TET2 O-GlcNAcylation and stability by promoting the interaction between OGT and TET2. Interacts with USP7. In terms of assembly, (Microbial infection) Interacts with human T-cell leukemia virus 1/HTLV-1 protein Tax; this interaction increases Tax interacting partner CREB1 O-GlcNAcylation. Ubiquitinated by the SCF(FBXO31) complex, leading to its proteasomal degradation. Post-translationally, phosphorylation on Ser-3 or Ser-4 by GSK3-beta positively regulates its activity. Phosphorylation at Thr-454 by AMPK promotes nuclear localization. In terms of processing, glycosylated via autocatalysis; O-GlcNAcylation at Ser-399 promotes nuclear localization. Glycosylated via autocatalysis; does not affect the enzyme activity but regulates substrate selectivity. Highly expressed in pancreas and to a lesser extent in skeletal muscle, heart, brain and placenta. Present in trace amounts in lung and liver.

It localises to the nucleus. The protein localises to the cytoplasm. Its subcellular location is the mitochondrion. The protein resides in the membrane. It is found in the cell membrane. It localises to the mitochondrion membrane. The protein localises to the cell projection. The enzyme catalyses L-seryl-[protein] + UDP-N-acetyl-alpha-D-glucosamine = 3-O-(N-acetyl-beta-D-glucosaminyl)-L-seryl-[protein] + UDP + H(+). It carries out the reaction L-threonyl-[protein] + UDP-N-acetyl-alpha-D-glucosamine = 3-O-(N-acetyl-beta-D-glucosaminyl)-L-threonyl-[protein] + UDP + H(+). It participates in protein modification; protein glycosylation. Its activity is regulated as follows. Subject to product inhibition by UDP. In terms of biological role, catalyzes the transfer of a single N-acetylglucosamine from UDP-GlcNAc to a serine or threonine residue in cytoplasmic and nuclear proteins resulting in their modification with a beta-linked N-acetylglucosamine (O-GlcNAc). Glycosylates a large and diverse number of proteins including histone H2B, AKT1, AMPK, ATG4B, CAPRIN1, EZH2, FNIP1, GSDMD, KRT7, LMNA, LMNB1, LMNB2, RPTOR, HOXA1, PFKL, KMT2E/MLL5, MAPT/TAU, TET2, RBL2, RET, NOD2 and HCFC1. Can regulate their cellular processes via cross-talk between glycosylation and phosphorylation or by affecting proteolytic processing. Involved in insulin resistance in muscle and adipocyte cells via glycosylating insulin signaling components and inhibiting the 'Thr-308' phosphorylation of AKT1, enhancing IRS1 phosphorylation and attenuating insulin signaling. Involved in glycolysis regulation by mediating glycosylation of 6-phosphofructokinase PFKL, inhibiting its activity. Plays a key role in chromatin structure by mediating O-GlcNAcylation of 'Ser-112' of histone H2B: recruited to CpG-rich transcription start sites of active genes via its interaction with TET proteins (TET1, TET2 or TET3). As part of the NSL complex indirectly involved in acetylation of nucleosomal histone H4 on several lysine residues. O-GlcNAcylation of 'Ser-75' of EZH2 increases its stability, and facilitating the formation of H3K27me3 by the PRC2/EED-EZH2 complex. Stabilizes KMT2E/MLL5 by mediating its glycosylation, thereby preventing KMT2E/MLL5 ubiquitination. Regulates circadian oscillation of the clock genes and glucose homeostasis in the liver. Stabilizes clock proteins BMAL1 and CLOCK through O-glycosylation, which prevents their ubiquitination and subsequent degradation. Promotes the CLOCK-BMAL1-mediated transcription of genes in the negative loop of the circadian clock such as PER1/2 and CRY1/2. O-glycosylates HCFC1 and regulates its proteolytic processing and transcriptional activity. Component of a THAP1/THAP3-HCFC1-OGT complex that is required for the regulation of the transcriptional activity of RRM1. Regulates mitochondrial motility in neurons by mediating glycosylation of TRAK1. Promotes autophagy by mediating O-glycosylation of ATG4B. Acts as a regulator of mTORC1 signaling by mediating O-glycosylation of RPTOR and FNIP1: O-GlcNAcylation of RPTOR in response to glucose sufficiency promotes activation of the mTORC1 complex. Functionally, the mitochondrial isoform (mOGT) is cytotoxic and triggers apoptosis in several cell types including INS1, an insulinoma cell line. Has N-acetylglucosaminyltransferase activity: glycosylates proteins, such as HNRNPU, NEUROD1, NUP62 and PDCD6IP. Displays specific substrate selectivity compared to other isoforms. This is UDP-N-acetylglucosamine--peptide N-acetylglucosaminyltransferase 110 kDa subunit from Homo sapiens (Human).